The chain runs to 201 residues: MSAKLETLSQNLQEHFGDKLKSLKLALGEITIEVAAADYFCVMTALRDEAAFGFEEMIDLCGVDYSTYGDGTWQGARFAVVVHLLSVANNWRLRVRVFAEDEGFPSVASITTVWASANWFEREAFDLYGIAFVGHDDLRRILTDYGFIGHPFRKDFPISGHVEMRYDPDQARVIYQPVTIEPRENTPRIVREDTFGDTAHG.

It belongs to the complex I 30 kDa subunit family. As to quaternary structure, NDH-1 is composed of 14 different subunits. Subunits NuoB, C, D, E, F, and G constitute the peripheral sector of the complex.

Its subcellular location is the cell inner membrane. The enzyme catalyses a quinone + NADH + 5 H(+)(in) = a quinol + NAD(+) + 4 H(+)(out). Functionally, NDH-1 shuttles electrons from NADH, via FMN and iron-sulfur (Fe-S) centers, to quinones in the respiratory chain. The immediate electron acceptor for the enzyme in this species is believed to be ubiquinone. Couples the redox reaction to proton translocation (for every two electrons transferred, four hydrogen ions are translocated across the cytoplasmic membrane), and thus conserves the redox energy in a proton gradient. This chain is NADH-quinone oxidoreductase subunit C, found in Dechloromonas aromatica (strain RCB).